The following is a 112-amino-acid chain: Probable small nuclear ribonucleoprotein Sm D2 (112 aa).

Over residues 1–15 the composition is skewed to basic and acidic residues; the sequence is MSRMNDETMEDKPDD. Residues 1–23 form a disordered region; it reads MSRMNDETMEDKPDDSNGPLSIL. In terms of domain architecture, Sm spans 20–106; the sequence is LSILMDSVNN…VILVLKNPLG (87 aa).

It belongs to the snRNP core protein family.

It localises to the nucleus. The protein resides in the cytoplasm. Its subcellular location is the cytosol. Its function is as follows. Plays a role in pre-mRNA splicing as a core component of the spliceosomal U1, U2, U4 and U5 small nuclear ribonucleoproteins (snRNPs), the building blocks of the spliceosome. The chain is Probable small nuclear ribonucleoprotein Sm D2 (snrpd2) from Dictyostelium discoideum (Social amoeba).